We begin with the raw amino-acid sequence, 137 residues long: Large-conductance mechanosensitive channel (137 aa).

Helical transmembrane passes span 10 to 30 (FAMRGNVVDLAVGVIIGAAFG) and 76 to 96 (GVFLQTVFDFVIVAFAIFMAI).

This sequence belongs to the MscL family. Homopentamer.

The protein resides in the cell inner membrane. Functionally, channel that opens in response to stretch forces in the membrane lipid bilayer. May participate in the regulation of osmotic pressure changes within the cell. This is Large-conductance mechanosensitive channel from Erwinia tasmaniensis (strain DSM 17950 / CFBP 7177 / CIP 109463 / NCPPB 4357 / Et1/99).